Here is a 62-residue protein sequence, read N- to C-terminus: Synergistic-type venom protein S2C4 (62 aa).

3 disulfide bridges follow: cysteine 3/cysteine 24, cysteine 17/cysteine 42, and cysteine 46/cysteine 57.

The protein belongs to the three-finger toxin family. Short-chain subfamily. Aminergic toxin sub-subfamily. In terms of assembly, homodimer; disulfide-linked. As to expression, expressed by the venom gland.

Its subcellular location is the secreted. This protein shows a synergetic toxic effect in that it enhances the toxicity of other toxins. This chain is Synergistic-type venom protein S2C4, found in Dendroaspis jamesoni kaimosae (Eastern Jameson's mamba).